We begin with the raw amino-acid sequence, 101 residues long: Protein S100-A4 (101 aa).

Alanine 2 bears the N-acetylalanine mark. EF-hand domains lie at 12–47 (IVSTFHKYSGKEGDKFKLNKTELKELLTRELPSFLG) and 50–85 (TDEAAFQKVMSNLDSNRDNEVDFQEYCVFLSCIAMM). Residues lysine 28 and glutamate 33 each coordinate Ca(2+). The residue at position 35 (lysine 35) is an N6-acetyllysine. Residues aspartate 63, asparagine 65, aspartate 67, glutamate 69, and glutamate 74 each coordinate Ca(2+).

This sequence belongs to the S-100 family. In terms of assembly, homodimer. Interacts with PPFIBP1 in a calcium-dependent mode. Interacts with PGLYRP1; this complex acts as a chemoattractant that promotes lymphocyte movement. Interacts with MYH9; this interaction increases cell motility. Interacts with Annexin 2/ANXA2. Interacts with TP53; this interaction promotes TP53 degradation. Interacts with CCR5 and CXCR3. Interacts with FCGR3A; this interaction inhibits PKC-dependent phosphorylation of FCGR3A. Specifically expressed in different metastatic cells.

It localises to the secreted. The protein resides in the nucleus. Its subcellular location is the cytoplasm. Its function is as follows. Calcium-binding protein that plays a role in various cellular processes including motility, angiogenesis, cell differentiation, apoptosis, and autophagy. Increases cell motility and invasiveness by interacting with non-muscle myosin heavy chain (NMMHC) IIA/MYH9. Mechanistically, promotes filament depolymerization and increases the amount of soluble myosin-IIA, resulting in the formation of stable protrusions facilitating chemotaxis. Also modulates the pro-apoptotic function of TP53 by binding to its C-terminal transactivation domain within the nucleus and reducing its protein levels. Within the extracellular space, stimulates cytokine production including granulocyte colony-stimulating factor and CCL24 from T-lymphocytes. In addition, stimulates T-lymphocyte chemotaxis by acting as a chemoattractant complex with PGLYRP1 that promotes lymphocyte migration via CCR5 and CXCR3 receptors. The protein is Protein S100-A4 (S100a4) of Mus musculus (Mouse).